A 151-amino-acid chain; its full sequence is Deoxyuridine 5'-triphosphate nucleotidohydrolase (151 aa).

Residues 70–72, N83, 87–89, and M97 each bind substrate; these read RSG and LID.

The protein belongs to the dUTPase family. Homotrimer. Mg(2+) serves as cofactor.

The enzyme catalyses dUTP + H2O = dUMP + diphosphate + H(+). Its pathway is pyrimidine metabolism; dUMP biosynthesis; dUMP from dCTP (dUTP route): step 2/2. This enzyme is involved in nucleotide metabolism: it produces dUMP, the immediate precursor of thymidine nucleotides and it decreases the intracellular concentration of dUTP so that uracil cannot be incorporated into DNA. In Escherichia fergusonii (strain ATCC 35469 / DSM 13698 / CCUG 18766 / IAM 14443 / JCM 21226 / LMG 7866 / NBRC 102419 / NCTC 12128 / CDC 0568-73), this protein is Deoxyuridine 5'-triphosphate nucleotidohydrolase.